The primary structure comprises 428 residues: Adenylosuccinate synthetase (428 aa).

GTP-binding positions include 12-18 and 40-42; these read GDEGKGK and GHT. The Proton acceptor role is filled by Asp-13. Residues Asp-13 and Gly-40 each coordinate Mg(2+). Residues 13-16, 38-41, Thr-128, Arg-142, Gln-223, Thr-238, and Arg-302 contribute to the IMP site; these read DEGK and NAGH. Residue His-41 is the Proton donor of the active site. Residue 298–304 participates in substrate binding; that stretch reads TTTGRPR. Residues Arg-304, 330-332, and 412-414 contribute to the GTP site; these read SID and SVG.

The protein belongs to the adenylosuccinate synthetase family. As to quaternary structure, homodimer. Requires Mg(2+) as cofactor.

Its subcellular location is the cytoplasm. It carries out the reaction IMP + L-aspartate + GTP = N(6)-(1,2-dicarboxyethyl)-AMP + GDP + phosphate + 2 H(+). It functions in the pathway purine metabolism; AMP biosynthesis via de novo pathway; AMP from IMP: step 1/2. Functionally, plays an important role in the de novo pathway of purine nucleotide biosynthesis. Catalyzes the first committed step in the biosynthesis of AMP from IMP. The sequence is that of Adenylosuccinate synthetase from Geobacillus sp. (strain WCH70).